We begin with the raw amino-acid sequence, 151 residues long: D-aminoacyl-tRNA deacylase (151 aa).

The Gly-cisPro motif, important for rejection of L-amino acids motif lies at 137–138 (GP).

Belongs to the DTD family. Homodimer.

It is found in the cytoplasm. It carries out the reaction glycyl-tRNA(Ala) + H2O = tRNA(Ala) + glycine + H(+). The enzyme catalyses a D-aminoacyl-tRNA + H2O = a tRNA + a D-alpha-amino acid + H(+). An aminoacyl-tRNA editing enzyme that deacylates mischarged D-aminoacyl-tRNAs. Also deacylates mischarged glycyl-tRNA(Ala), protecting cells against glycine mischarging by AlaRS. Acts via tRNA-based rather than protein-based catalysis; rejects L-amino acids rather than detecting D-amino acids in the active site. By recycling D-aminoacyl-tRNA to D-amino acids and free tRNA molecules, this enzyme counteracts the toxicity associated with the formation of D-aminoacyl-tRNA entities in vivo and helps enforce protein L-homochirality. In Geobacter metallireducens (strain ATCC 53774 / DSM 7210 / GS-15), this protein is D-aminoacyl-tRNA deacylase.